The sequence spans 369 residues: Naringenin,2-oxoglutarate 3-dioxygenase (369 aa).

Residues C193 to P297 enclose the Fe2OG dioxygenase domain. Fe cation is bound by residues H220, D222, and H278. R288 is a binding site for 2-oxoglutarate.

The protein belongs to the iron/ascorbate-dependent oxidoreductase family. The cofactor is Fe(2+). L-ascorbate serves as cofactor.

It carries out the reaction a (2S)-flavan-4-one + 2-oxoglutarate + O2 = a (2R,3R)-dihydroflavonol + succinate + CO2. It participates in secondary metabolite biosynthesis; flavonoid biosynthesis. Its function is as follows. Catalyzes the 3-beta-hydroxylation of 2S-flavanones to 2R,3R-dihydroflavonols which are intermediates in the biosynthesis of flavonols, anthocyanidins, catechins and proanthocyanidins in plants. The polypeptide is Naringenin,2-oxoglutarate 3-dioxygenase (AN3) (Petunia hybrida (Petunia)).